A 933-amino-acid chain; its full sequence is Protein translocase subunit SecA (933 aa).

ATP-binding positions include glutamine 87, 105–109 (GEGKT), and aspartate 515. Residues cysteine 917, cysteine 919, cysteine 928, and histidine 929 each contribute to the Zn(2+) site.

It belongs to the SecA family. In terms of assembly, monomer and homodimer. Part of the essential Sec protein translocation apparatus which comprises SecA, SecYEG and auxiliary proteins SecDF-YajC and YidC. Zn(2+) serves as cofactor.

It is found in the cell inner membrane. It localises to the cytoplasm. The catalysed reaction is ATP + H2O + cellular proteinSide 1 = ADP + phosphate + cellular proteinSide 2.. Its function is as follows. Part of the Sec protein translocase complex. Interacts with the SecYEG preprotein conducting channel. Has a central role in coupling the hydrolysis of ATP to the transfer of proteins into and across the cell membrane, serving both as a receptor for the preprotein-SecB complex and as an ATP-driven molecular motor driving the stepwise translocation of polypeptide chains across the membrane. The polypeptide is Protein translocase subunit SecA (Burkholderia cenocepacia (strain ATCC BAA-245 / DSM 16553 / LMG 16656 / NCTC 13227 / J2315 / CF5610) (Burkholderia cepacia (strain J2315))).